The sequence spans 121 residues: Large ribosomal subunit protein uL22 (121 aa).

It belongs to the universal ribosomal protein uL22 family. In terms of assembly, part of the 50S ribosomal subunit.

In terms of biological role, this protein binds specifically to 23S rRNA; its binding is stimulated by other ribosomal proteins, e.g. L4, L17, and L20. It is important during the early stages of 50S assembly. It makes multiple contacts with different domains of the 23S rRNA in the assembled 50S subunit and ribosome. Its function is as follows. The globular domain of the protein is located near the polypeptide exit tunnel on the outside of the subunit, while an extended beta-hairpin is found that lines the wall of the exit tunnel in the center of the 70S ribosome. The polypeptide is Large ribosomal subunit protein uL22 (Parasynechococcus marenigrum (strain WH8102)).